The sequence spans 425 residues: Protein CLP1 homolog (425 aa).

ATP is bound by residues E18, K59, and 121–126; that span reads DVGKST.

Belongs to the Clp1 family. Clp1 subfamily.

The protein resides in the nucleus. Its function is as follows. Required for endonucleolytic cleavage during polyadenylation-dependent pre-mRNA 3'-end formation. The sequence is that of Protein CLP1 homolog (cbc) from Drosophila ananassae (Fruit fly).